A 451-amino-acid chain; its full sequence is Tubulin beta-1 chain (451 aa).

An MREI motif motif is present at residues 1 to 4 (MREI). The GTP site is built by Q11, E69, S138, G142, T143, and G144. E69 serves as a coordination point for Mg(2+). S172 is modified (phosphoserine; by CDK1). Residues N204 and N226 each contribute to the GTP site. The segment at 432 to 451 (LEEDEEVTEEAEMEPEDKGH) is disordered. Positions 433–451 (EEDEEVTEEAEMEPEDKGH) are enriched in acidic residues. Residue E440 is modified to 5-glutamyl polyglutamate.

The protein belongs to the tubulin family. Dimer of alpha and beta chains. A typical microtubule is a hollow water-filled tube with an outer diameter of 25 nm and an inner diameter of 15 nM. Alpha-beta heterodimers associate head-to-tail to form protofilaments running lengthwise along the microtubule wall with the beta-tubulin subunit facing the microtubule plus end conferring a structural polarity. Microtubules usually have 13 protofilaments but different protofilament numbers can be found in some organisms and specialized cells. Interacts with RANBP10. The cofactor is Mg(2+). In terms of processing, some glutamate residues at the C-terminus are polyglutamylated, resulting in polyglutamate chains on the gamma-carboxyl group. Polyglutamylation plays a key role in microtubule severing by spastin (SPAST). SPAST preferentially recognizes and acts on microtubules decorated with short polyglutamate tails: severing activity by SPAST increases as the number of glutamates per tubulin rises from one to eight, but decreases beyond this glutamylation threshold. Glutamylation is also involved in cilia motility. Some glutamate residues at the C-terminus are monoglycylated but not polyglycylated due to the absence of functional TTLL10 in human. Monoglycylation is mainly limited to tubulin incorporated into cilia and flagella axonemes, which is required for their stability and maintenance. Flagella glycylation controls sperm motility. Both polyglutamylation and monoglycylation can coexist on the same protein on adjacent residues, and lowering glycylation levels increases polyglutamylation, and reciprocally. Post-translationally, phosphorylated on Ser-172 by CDK1 during the cell cycle, from metaphase to telophase, but not in interphase. This phosphorylation inhibits tubulin incorporation into microtubules. In terms of tissue distribution, hematopoietic cell-specific. Major isotype in leukocytes, where it represents 50% of all beta-tubulins.

Its subcellular location is the cytoplasm. The protein localises to the cytoskeleton. Functionally, tubulin is the major constituent of microtubules, a cylinder consisting of laterally associated linear protofilaments composed of alpha- and beta-tubulin heterodimers. Microtubules grow by the addition of GTP-tubulin dimers to the microtubule end, where a stabilizing cap forms. Below the cap, tubulin dimers are in GDP-bound state, owing to GTPase activity of alpha-tubulin. The sequence is that of Tubulin beta-1 chain (TUBB1) from Homo sapiens (Human).